Here is a 1235-residue protein sequence, read N- to C-terminus: Topoisomerase 1-associated factor 1 (1235 aa).

4 disordered regions span residues 327-357, 584-610, 812-841, and 897-1235; these read RERK…GPPV, GEEA…HAER, EGAA…TEAR, and EFSP…SDEE. Acidic residues predominate over residues 585 to 603; the sequence is EEAEDVGVPEDNDADDSGD. Residues 929-947 show a composition bias toward acidic residues; sequence DDDEEEIRGFLGDDDDEDF. The segment covering 964 to 973 has biased composition (basic residues); the sequence is QKKRQRKRRR. Residues 977 to 986 are compositionally biased toward acidic residues; it reads SGDEEDEGVS. The span at 999-1044 shows a compositional bias: basic and acidic residues; it reads EKELEKIRKIKSEMYVHASDDETDDERDREFFERERKRQETKDSKF. Acidic residues-rich tracts occupy residues 1070 to 1081 and 1099 to 1118; these read VLDDEPESDESE and SEEE…SDEE. Basic residues predominate over residues 1124–1150; the sequence is AKSKTSKRKAAVPSKRPARRPGTAKKR. Residues 1156-1170 show a composition bias toward acidic residues; the sequence is SDNDEDEDEEEDAMD. Residues 1193–1202 are compositionally biased toward basic and acidic residues; that stretch reads LGRRIDKMAM. The segment covering 1203 to 1212 has biased composition (acidic residues); the sequence is DDGDEDEDDQ.

It belongs to the timeless family. Component of the fork protection complex (FPC) consisting of tof-1 and csm-3.

The protein localises to the nucleus. Its function is as follows. Forms a fork protection complex (FPC) with csm-3 and which is required for chromosome segregation during meiosis and DNA damage repair. FPC coordinates leading and lagging strand synthesis and moves with the replication fork. FPC stabilizes replication forks in a configuration that is recognized by replication checkpoint sensors. The sequence is that of Topoisomerase 1-associated factor 1 (tof-1) from Neurospora crassa (strain ATCC 24698 / 74-OR23-1A / CBS 708.71 / DSM 1257 / FGSC 987).